The following is a 164-amino-acid chain: Phosphopantetheine adenylyltransferase (164 aa).

Position 9 (Ser-9) interacts with substrate. ATP-binding positions include 9–10 and His-17; that span reads SF. Lys-41, Val-78, and Arg-92 together coordinate substrate. Residues 93 to 95, Glu-103, and 128 to 134 each bind ATP; these read GLR and VRTITAT.

Belongs to the bacterial CoaD family. Homohexamer. It depends on Mg(2+) as a cofactor.

It localises to the cytoplasm. The enzyme catalyses (R)-4'-phosphopantetheine + ATP + H(+) = 3'-dephospho-CoA + diphosphate. The protein operates within cofactor biosynthesis; coenzyme A biosynthesis; CoA from (R)-pantothenate: step 4/5. In terms of biological role, reversibly transfers an adenylyl group from ATP to 4'-phosphopantetheine, yielding dephospho-CoA (dPCoA) and pyrophosphate. This chain is Phosphopantetheine adenylyltransferase, found in Brucella suis (strain ATCC 23445 / NCTC 10510).